Consider the following 656-residue polypeptide: NADH-ubiquinone oxidoreductase chain 5 (656 aa).

17 consecutive transmembrane segments (helical) span residues 5-23 (IIIL…GRKL), 30-52 (IITC…EVGF), 81-103 (LTVS…SISY), 112-129 (RFFS…ILVT), 133-155 (YLLM…SFWF), 168-190 (FLTN…WSLG), 200-222 (LAPY…GAMA), 243-262 (VSAL…LLMR), 272-294 (TVLL…VGLF), 301-320 (VIAY…IGLS), 324-346 (IALF…AGSI), 367-389 (PLTY…LTGF), 409-431 (SVYA…VIYL), 452-471 (IFLT…FGYL), 514-536 (FIFT…GSVF), 607-629 (LSTG…FIII), and 634-653 (QISS…SLNF).

This sequence belongs to the complex I subunit 5 family.

The protein resides in the mitochondrion inner membrane. The enzyme catalyses a ubiquinone + NADH + 5 H(+)(in) = a ubiquinol + NAD(+) + 4 H(+)(out). Functionally, core subunit of the mitochondrial membrane respiratory chain NADH dehydrogenase (Complex I) that is believed to belong to the minimal assembly required for catalysis. Complex I functions in the transfer of electrons from NADH to the respiratory chain. The immediate electron acceptor for the enzyme is believed to be ubiquinone. The chain is NADH-ubiquinone oxidoreductase chain 5 (ND5) from Cryphonectria parasitica (Chestnut blight fungus).